A 154-amino-acid chain; its full sequence is UPF0178 protein Sala_2376 (154 aa).

This sequence belongs to the UPF0178 family.

The polypeptide is UPF0178 protein Sala_2376 (Sphingopyxis alaskensis (strain DSM 13593 / LMG 18877 / RB2256) (Sphingomonas alaskensis)).